The following is a 384-amino-acid chain: Dual-specificity RNA methyltransferase RlmN (384 aa).

The active-site Proton acceptor is the glutamate 105. One can recognise a Radical SAM core domain in the interval 111-350 (EVDRATLCVS…TIVRKTRGDD (240 aa)). Residues cysteine 118 and cysteine 355 are joined by a disulfide bond. The [4Fe-4S] cluster site is built by cysteine 125, cysteine 129, and cysteine 132. S-adenosyl-L-methionine contacts are provided by residues 179–180 (GE), serine 211, 233–235 (SLH), and asparagine 312. Catalysis depends on cysteine 355, which acts as the S-methylcysteine intermediate.

It belongs to the radical SAM superfamily. RlmN family. The cofactor is [4Fe-4S] cluster.

It localises to the cytoplasm. It catalyses the reaction adenosine(2503) in 23S rRNA + 2 reduced [2Fe-2S]-[ferredoxin] + 2 S-adenosyl-L-methionine = 2-methyladenosine(2503) in 23S rRNA + 5'-deoxyadenosine + L-methionine + 2 oxidized [2Fe-2S]-[ferredoxin] + S-adenosyl-L-homocysteine. It carries out the reaction adenosine(37) in tRNA + 2 reduced [2Fe-2S]-[ferredoxin] + 2 S-adenosyl-L-methionine = 2-methyladenosine(37) in tRNA + 5'-deoxyadenosine + L-methionine + 2 oxidized [2Fe-2S]-[ferredoxin] + S-adenosyl-L-homocysteine. Its function is as follows. Specifically methylates position 2 of adenine 2503 in 23S rRNA and position 2 of adenine 37 in tRNAs. m2A2503 modification seems to play a crucial role in the proofreading step occurring at the peptidyl transferase center and thus would serve to optimize ribosomal fidelity. The protein is Dual-specificity RNA methyltransferase RlmN of Escherichia coli O9:H4 (strain HS).